The following is a 99-amino-acid chain: CTP synthase (99 aa).

In terms of domain architecture, Glutamine amidotransferase type-1 spans threonine 1 to lysine 99. An L-glutamine-binding site is contributed by arginine 28. Catalysis depends on residues histidine 73 and glutamate 75.

It belongs to the CTP synthase family. Homotetramer.

The enzyme catalyses UTP + L-glutamine + ATP + H2O = CTP + L-glutamate + ADP + phosphate + 2 H(+). It catalyses the reaction L-glutamine + H2O = L-glutamate + NH4(+). The catalysed reaction is UTP + NH4(+) + ATP = CTP + ADP + phosphate + 2 H(+). The protein operates within pyrimidine metabolism; CTP biosynthesis via de novo pathway; CTP from UDP: step 2/2. With respect to regulation, allosterically activated by GTP, when glutamine is the substrate; GTP has no effect on the reaction when ammonia is the substrate. The allosteric effector GTP functions by stabilizing the protein conformation that binds the tetrahedral intermediate(s) formed during glutamine hydrolysis. Inhibited by the product CTP, via allosteric rather than competitive inhibition. Catalyzes the ATP-dependent amination of UTP to CTP with either L-glutamine or ammonia as the source of nitrogen. Regulates intracellular CTP levels through interactions with the four ribonucleotide triphosphates. The sequence is that of CTP synthase from Mycoplasma capricolum subsp. capripneumoniae.